Here is a 493-residue protein sequence, read N- to C-terminus: Ribose import ATP-binding protein RbsA (493 aa).

2 ABC transporter domains span residues Leu5 to Arg241 and Glu252 to Ile491. ATP is bound at residue Gly37 to Ser44.

The protein belongs to the ABC transporter superfamily. Ribose importer (TC 3.A.1.2.1) family. As to quaternary structure, the complex is composed of an ATP-binding protein (RbsA), two transmembrane proteins (RbsC) and a solute-binding protein (RbsB).

Its subcellular location is the cell inner membrane. The enzyme catalyses D-ribose(out) + ATP + H2O = D-ribose(in) + ADP + phosphate + H(+). Functionally, part of the ABC transporter complex RbsABC involved in ribose import. Responsible for energy coupling to the transport system. In Haemophilus influenzae (strain ATCC 51907 / DSM 11121 / KW20 / Rd), this protein is Ribose import ATP-binding protein RbsA.